A 287-amino-acid polypeptide reads, in one-letter code: Ethanolamine ammonia-lyase small subunit (287 aa).

The adenosylcob(III)alamin site is built by Val-168, Glu-189, and Cys-218.

This sequence belongs to the EutC family. The basic unit is a heterodimer which dimerizes to form tetramers. The heterotetramers trimerize; 6 large subunits form a core ring with 6 small subunits projecting outwards. Adenosylcob(III)alamin is required as a cofactor.

It localises to the bacterial microcompartment. The enzyme catalyses ethanolamine = acetaldehyde + NH4(+). The protein operates within amine and polyamine degradation; ethanolamine degradation. Its function is as follows. Catalyzes the deamination of various vicinal amino-alcohols to oxo compounds. Allows this organism to utilize ethanolamine as the sole source of nitrogen and carbon in the presence of external vitamin B12. In Pseudomonas syringae pv. tomato (strain ATCC BAA-871 / DC3000), this protein is Ethanolamine ammonia-lyase small subunit.